A 108-amino-acid polypeptide reads, in one-letter code: MSFSRRPKVTKSDIVDQISLNIRNNNLKLEKKYIRLVIDAFFEELKSNLCSNNVIEFRSFGTFEVRKRRGRLNARNPQTGEYVKVLDHHVAYFRPGKDLKERVWGIKG.

Belongs to the bacterial histone-like protein family.

Histone-like DNA-binding protein which is capable of wrapping DNA to stabilize it, and thus to prevent its denaturation under extreme environmental conditions. This chain is DNA-binding protein HBbu (hbb), found in Borrelia andersonii (Borreliella andersonii).